Consider the following 36-residue polypeptide: Pancreatic polypeptide (36 aa).

Position 36 is a tyrosine amide (Tyr-36).

The protein belongs to the NPY family.

The protein resides in the secreted. In terms of biological role, hormone secreted by pancreatic cells that acts as a regulator of pancreatic and gastrointestinal functions. In Struthio camelus (Common ostrich), this protein is Pancreatic polypeptide (PPY).